A 271-amino-acid chain; its full sequence is Histone chaperone asf-1 (271 aa).

A disordered region spans residues 152 to 271 (KWDSEASAPP…PKQQGMAMAQ (120 aa)). 2 stretches are compositionally biased toward acidic residues: residues 168–185 (PEAD…DELA) and 211–258 (IEED…EMEI).

Belongs to the ASF1 family. Interacts with histone H3 and histone H4.

The protein localises to the nucleus. Its function is as follows. Histone chaperone that facilitates histone deposition and histone exchange and removal during nucleosome assembly and disassembly. The protein is Histone chaperone asf-1 (asf-1) of Neurospora crassa (strain ATCC 24698 / 74-OR23-1A / CBS 708.71 / DSM 1257 / FGSC 987).